The following is a 467-amino-acid chain: E3 ubiquitin-protein ligase TRIM11 (467 aa).

The RING-type zinc finger occupies C16–R57. A Phosphoserine modification is found at S85. The segment at V87–L127 adopts a B box-type zinc-finger fold. The Zn(2+) site is built by C92, H95, C114, and H119. Residues L127 to L207 are a coiled coil. In terms of domain architecture, B30.2/SPRY spans E267 to S460. Positions D304–Q313 are enriched in basic and acidic residues. The disordered stretch occupies residues D304–D325.

It belongs to the TRIM/RBCC family. Binds cytoplasmic tail of integrin alpha-1. Interacts with the HN peptide. Interacts with PHOX2B. Interacts (when autoubiquitinated) with SQSTM1/p62; promoting AIM2 recruitment to autophagosomes. Interacts with AIM2; promoting its autophagy-dependent degradation. Autoubiquitinated upon DNA stimulation; autoubiquitination promotes interaction with SQSTM1/p62 and recruitment of AIM2 to autophagosomes.

Its subcellular location is the cytoplasm. The protein localises to the nucleus. The enzyme catalyses S-ubiquitinyl-[E2 ubiquitin-conjugating enzyme]-L-cysteine + [acceptor protein]-L-lysine = [E2 ubiquitin-conjugating enzyme]-L-cysteine + N(6)-ubiquitinyl-[acceptor protein]-L-lysine.. It participates in protein modification; protein ubiquitination. E3 ubiquitin-protein ligase that promotes the degradation of insoluble ubiquitinated proteins, including insoluble PAX6, poly-Gln repeat expanded HTT and poly-Ala repeat expanded ARX. Mediates PAX6 ubiquitination leading to proteasomal degradation, thereby modulating cortical neurogenesis. May also inhibit PAX6 transcriptional activity, possibly in part by preventing the binding of PAX6 to its consensus sequences. May contribute to the regulation of the intracellular level of HN (humanin) or HN-containing proteins through the proteasomal degradation pathway. Mediates MED15 ubiquitination leading to proteasomal degradation. May contribute to the innate restriction of retroviruses. Upon overexpression, reduces HIV-1 and murine leukemia virus infectivity, by suppressing viral gene expression. Antiviral activity depends on a functional E3 ubiquitin-protein ligase domain. May regulate TRIM5 turnover via the proteasome pathway, thus counteracting the TRIM5-mediated cross-species restriction of retroviral infection at early stages of the retroviral life cycle. Acts as an inhibitor of the AIM2 inflammasome by promoting autophagy-dependent degradation of AIM2. Mechanistically, undergoes autoubiquitination upon DNA stimulation, promoting interaction with AIM2 and SQSTM1/p62, leading to AIM2 recruitment to autophagosomes. This chain is E3 ubiquitin-protein ligase TRIM11 (Trim11), found in Rattus norvegicus (Rat).